The sequence spans 118 residues: Large ribosomal subunit protein uL18 (118 aa).

Residues 1–24 are disordered; sequence MITKPDKNKIRQKRHRRVRGKLSG. Residues 10–20 are compositionally biased toward basic residues; the sequence is IRQKRHRRVRG.

This sequence belongs to the universal ribosomal protein uL18 family. As to quaternary structure, part of the 50S ribosomal subunit; part of the 5S rRNA/L5/L18/L25 subcomplex. Contacts the 5S and 23S rRNAs.

This is one of the proteins that bind and probably mediate the attachment of the 5S RNA into the large ribosomal subunit, where it forms part of the central protuberance. The sequence is that of Large ribosomal subunit protein uL18 from Streptococcus sanguinis (strain SK36).